Reading from the N-terminus, the 163-residue chain is Peptidyl-prolyl cis-trans isomerase-like 1 (163 aa).

The 155-residue stretch at 1 to 155 folds into the PPIase cyclophilin-type domain; that stretch reads MATDVAVETT…TEVKIVKARV (155 aa).

It belongs to the cyclophilin-type PPIase family. PPIL1 subfamily.

The catalysed reaction is [protein]-peptidylproline (omega=180) = [protein]-peptidylproline (omega=0). Functionally, PPIases accelerate the folding of proteins. It catalyzes the cis-trans isomerization of proline imidic peptide bonds in oligopeptides. The sequence is that of Peptidyl-prolyl cis-trans isomerase-like 1 (ppi-1) from Neurospora crassa (strain ATCC 24698 / 74-OR23-1A / CBS 708.71 / DSM 1257 / FGSC 987).